Reading from the N-terminus, the 197-residue chain is GTP cyclohydrolase-2 (197 aa).

49-53 (RVHSE) provides a ligand contact to GTP. 3 residues coordinate Zn(2+): C54, C65, and C67. Residues Q70, 92–94 (EGR), and T114 contribute to the GTP site. D126 functions as the Proton acceptor in the catalytic mechanism. Residue R128 is the Nucleophile of the active site. 2 residues coordinate GTP: T149 and K154.

The protein belongs to the GTP cyclohydrolase II family. Homodimer. The cofactor is Zn(2+).

The catalysed reaction is GTP + 4 H2O = 2,5-diamino-6-hydroxy-4-(5-phosphoribosylamino)-pyrimidine + formate + 2 phosphate + 3 H(+). The protein operates within cofactor biosynthesis; riboflavin biosynthesis; 5-amino-6-(D-ribitylamino)uracil from GTP: step 1/4. Its function is as follows. Catalyzes the conversion of GTP to 2,5-diamino-6-ribosylamino-4(3H)-pyrimidinone 5'-phosphate (DARP), formate and pyrophosphate. The chain is GTP cyclohydrolase-2 from Cronobacter sakazakii (strain ATCC BAA-894) (Enterobacter sakazakii).